Reading from the N-terminus, the 489-residue chain is Aerolysin (489 aa).

Residues 1–24 (MMNRIITANLANLASSLMLAQVLG) form the signal peptide. Disulfide bonds link Cys-44/Cys-100 and Cys-184/Cys-189. The segment at 70–86 (WQITGLADRWVIMGPGY) is interaction with host N-linked glycan. The interval 257–289 (YSLSEKVTTKNKFQWPLVGETELAIEIAASQSW) is part of the transmembrane beta-barrel after proteolytic activation of the toxin and insertion into the host membrane. Positions 347 to 356 (RWGGNAWYTH) are interaction with glycans from host GPI-anchor. Residues 445–489 (TRSAKAAQLRSASAEEVALTSVDLDSEALANEGFGNVSLTIVPVQ) constitute a propeptide that is removed on maturation.

It belongs to the aerolysin family. As to quaternary structure, homodimer in solution; homoheptamer in the host membrane. After binding to GPI-anchored proteins in target membranes and proteolytic removal of the C-terminal propeptide, the protein assembles into a heptameric pre-pore complex. A further conformation change leads to insertion into the host membrane. In terms of processing, proteolytic cleavage and subsequent release of the propeptide trigger a major conformation change, leading to the formation of a heptameric pre-pore that then inserts into the host membrane.

It localises to the secreted. The protein localises to the host cell membrane. In terms of biological role, secreted, cytolytic toxin that forms pores in host membranes after proteolytic removal of a C-terminal propeptide, leading to destruction of the membrane permeability barrier and cell death. The pores are formed by transmembrane beta-strands and are approximately 3 nm in diameter. In Aeromonas salmonicida, this protein is Aerolysin (ash3).